A 394-amino-acid chain; its full sequence is MAATTTLRSPKIPHPPPESTPSNLSYLSQISLTPVPKRRRFISIYACSNAESNSQFGSEIKKSQAIELNKVSDEHPYEFNSKDSPNPLPRPLTSADLSNMATEGSRLRVAYQGVRGAYSESAAEKAYPNCEAVPCEQFDTAFEAVERWLVDRAVLPIENSLGGSIHRNYDLLLRHRLHIVGEVKLAIRHCLLANNGVKIEDLKRVLSHPQALAQCENNLTKLGLVREAVDDTAGAAKYIAFQQLKDAGAVASLAAARIYGLNVLAQDIQDDSDNVTRFLMLAREPIIPGTDKPFKTSVVFSLDEGPGVLFKALAVFAMRNINLTKIESRPLQKQALRVLDDSADGFPKYFPYLFYVDFEASMADQRAQNALGHLKEFATFLRVLGSYPSDSGIA.

The segment at 1–24 (MAATTTLRSPKIPHPPPESTPSNL) is disordered. The N-terminal 47 residues, 1–47 (MAATTTLRSPKIPHPPPESTPSNLSYLSQISLTPVPKRRRFISIYAC), are a transit peptide targeting the chloroplast. A Prephenate dehydratase domain is found at 108 to 283 (RVAYQGVRGA…NVTRFLMLAR (176 aa)). The region spanning 297–388 (SVVFSLDEGP…TFLRVLGSYP (92 aa)) is the ACT domain.

As to expression, expressed at low levels in petals (corollas and tubes), stems, leaves, pistils, stamens, ovaries and sepals.

The protein localises to the plastid. The protein resides in the chloroplast stroma. The catalysed reaction is prephenate + H(+) = 3-phenylpyruvate + CO2 + H2O. The enzyme catalyses L-arogenate + H(+) = L-phenylalanine + CO2 + H2O. Its pathway is amino-acid biosynthesis; L-phenylalanine biosynthesis; L-phenylalanine from L-arogenate: step 1/1. Converts the prephenate and L-arogenate produced from the shikimate-chorismate pathway into 3-phenylpyruvate and phenylalanine (Phe), respectively. Involved in floral volatile benzenoids and phenylpropanoids (FVBP) production. The polypeptide is Arogenate dehydratase 2 (Petunia hybrida (Petunia)).